The following is an 828-amino-acid chain: Periplasmic nitrate reductase (828 aa).

The segment at residues 1–31 is a signal peptide (tat-type signal); the sequence is MKLSRRSFMKANAVAAAAAAAGLSVPGVARA. In terms of domain architecture, 4Fe-4S Mo/W bis-MGD-type spans 39-95; that stretch reads IKWDKAPCRFCGTGCGVLVGTQQGRVVACQGDPDAPVNRGLNCIKGYFLPKIMYGKD. The [4Fe-4S] cluster site is built by C46, C49, C53, and C81. Mo-bis(molybdopterin guanine dinucleotide)-binding positions include K83, Q150, N175, C179, 212-219, 243-247, 262-264, M372, Q376, N482, 508-509, K531, D558, and 718-727; these read WGSNMAEM, STFQH, QSD, SD, and TGRVLEHWHT. F794 provides a ligand contact to substrate. The Mo-bis(molybdopterin guanine dinucleotide) site is built by N802 and K819.

This sequence belongs to the prokaryotic molybdopterin-containing oxidoreductase family. NasA/NapA/NarB subfamily. Component of the periplasmic nitrate reductase NapAB complex composed of NapA and NapB. It depends on [4Fe-4S] cluster as a cofactor. Mo-bis(molybdopterin guanine dinucleotide) serves as cofactor. In terms of processing, predicted to be exported by the Tat system. The position of the signal peptide cleavage has not been experimentally proven.

The protein localises to the periplasm. It carries out the reaction 2 Fe(II)-[cytochrome] + nitrate + 2 H(+) = 2 Fe(III)-[cytochrome] + nitrite + H2O. Its function is as follows. Catalytic subunit of the periplasmic nitrate reductase complex NapAB. Receives electrons from NapB and catalyzes the reduction of nitrate to nitrite. The polypeptide is Periplasmic nitrate reductase (Salmonella arizonae (strain ATCC BAA-731 / CDC346-86 / RSK2980)).